A 270-amino-acid chain; its full sequence is Hydroxyethylthiazole kinase (270 aa).

Residue Met-47 coordinates substrate. Arg-123 and Ser-170 together coordinate ATP. Gly-197 contributes to the substrate binding site.

It belongs to the Thz kinase family. Requires Mg(2+) as cofactor.

The catalysed reaction is 5-(2-hydroxyethyl)-4-methylthiazole + ATP = 4-methyl-5-(2-phosphooxyethyl)-thiazole + ADP + H(+). It participates in cofactor biosynthesis; thiamine diphosphate biosynthesis; 4-methyl-5-(2-phosphoethyl)-thiazole from 5-(2-hydroxyethyl)-4-methylthiazole: step 1/1. Its function is as follows. Catalyzes the phosphorylation of the hydroxyl group of 4-methyl-5-beta-hydroxyethylthiazole (THZ). The chain is Hydroxyethylthiazole kinase from Syntrophus aciditrophicus (strain SB).